Consider the following 1632-residue polypeptide: Guanine exchange factor for Rac 30 (1632 aa).

Positions 16 to 122 (NIQIDSFTSW…VIFLLIQKIK (107 aa)) constitute a Calponin-homology (CH) domain. 2 disordered regions span residues 134–155 (QGETTGTTTTITSTNTTTTPTK) and 171–285 (FSHI…PTTG). Low complexity-rich tracts occupy residues 137 to 154 (TTGTTTTITSTNTTTTPT) and 180 to 284 (QSSS…SPTT). 2 IQ domains span residues 388–417 (DLKKIIFMQSVIRGYLVRSKWRNVLEKYKQ) and 432–461 (AYRGLIRVQAIVKGKIQRKKLFKMFPLYRR). The DH domain occupies 460–638 (RRNEIVKEIL…KDVAEYVNEK (179 aa)). Over residues 775–795 (QINNQNNNQNNNQNNNLNNNN) the composition is skewed to low complexity. Positions 775-798 (QINNQNNNQNNNQNNNLNNNNDDS) are disordered. Residues 940–1038 (DSEFSNVLEK…WISLIRLSIK (99 aa)) enclose the PH 1 domain. The segment covering 1138–1156 (STSASQSQSQSPSPSPSHS) has biased composition (low complexity). Residues 1138 to 1161 (STSASQSQSQSPSPSPSHSINQKQ) form a disordered region. Residues 1271–1389 (NSCGDNINND…NNNNNNSQNG (119 aa)) form the Arf-GAP domain. Residues 1286–1309 (CAECGASDPSWVSINYGVVVCLDC) form a C4-type zinc finger. Composition is skewed to low complexity over residues 1380-1402 (NNNNNNSQNGDSTTPTPTPTSTT), 1409-1431 (STPTSPNLNSQSSPPPTATTTQT), and 1441-1481 (SSPT…TTPT). The tract at residues 1380–1521 (NNNNNNSQNG…SSHAITERKT (142 aa)) is disordered. The span at 1500–1515 (DTSNGKGTWSRGSSHA) shows a compositional bias: polar residues. The 100-residue stretch at 1532–1631 (KKEHQGYLFK…WLDVLSSHTT (100 aa)) folds into the PH 2 domain.

The protein resides in the membrane. The protein localises to the cytoplasmic vesicle. It localises to the phagosome membrane. Its function is as follows. GTPase-activating protein for Rac involved in streaming and development. The polypeptide is Guanine exchange factor for Rac 30 (gxcDD) (Dictyostelium discoideum (Social amoeba)).